We begin with the raw amino-acid sequence, 76 residues long: uncharacterized protein (76 aa).

Its subcellular location is the plastid. This is an uncharacterized protein from Euglena longa (Euglenophycean alga).